Here is a 280-residue protein sequence, read N- to C-terminus: Antiactivator FleN (280 aa).

Residues 19–26, Glu153, Asn181, 215–217, and Arg221 contribute to the ATP site; these read KGGVGKTN and PYD.

Belongs to the ParA family. In terms of assembly, forms homodimers. Interacts with FleQ.

With respect to regulation, ATP-binding allows dimerization and subsequent antagonistic effect against FleQ. Its function is as follows. ATPase that plays an important role in maintaining flagellar number in Pseudomonas aeruginosa. Exhibits anti-activator activity against FleQ, the global transcriptional regulator of flagellar genes. This chain is Antiactivator FleN, found in Pseudomonas aeruginosa (strain ATCC 15692 / DSM 22644 / CIP 104116 / JCM 14847 / LMG 12228 / 1C / PRS 101 / PAO1).